The sequence spans 221 residues: UPF0758 protein PC1_4100 (221 aa).

The MPN domain maps to A99–I221. 3 residues coordinate Zn(2+): H170, H172, and D183. The JAMM motif motif lies at H170 to D183.

This sequence belongs to the UPF0758 family. YicR subfamily.

In Pectobacterium carotovorum subsp. carotovorum (strain PC1), this protein is UPF0758 protein PC1_4100.